The following is a 393-amino-acid chain: MANRRSLFSLSLIFVFMINSAIASPLTYNVASLGAKADGKTDSTKAFLSAWAKACASMNPGVIYVPAGTFFLRDVVFSGPCKNNAITFRIAGTLVAPSDYRVIGNAANWIFFHHVNGVTISGGILDGQGTALWACKACHGESCPSGATTLGFSDSNNIVVSGLASLNSQMFHIVINDFQNVQMQGVRVSRSGNSPNTDGIHVQMSSGVTILNSKIATGDDCVSIGPGTSNLWIEGVACGPGHGISIGSLGKEQEEAGVQNVTVKTVTFSGTQNGLRIKSWGRPSTGFARNILFQHATMVNVENPIVIDQHYCPDNKGCPGQVSGVQISDVTYEDIHGTSATEVAVKFDCSPKHPCREIKLEDVKLTYKNQAAESSCSHADGTTEGVVQPTSCL.

The first 23 residues, 1 to 23 (MANRRSLFSLSLIFVFMINSAIA), serve as a signal peptide directing secretion. PbH1 repeat units lie at residues 115–136 (VNGV…WACK), 178–204 (FQNV…HVQM), 205–226 (SSGV…SIGP), 228–248 (TSNL…SIGS), 258–279 (VQNV…RIKS), and 288–309 (ARNI…VIDQ). The active-site Proton donor is the aspartate 219. A disulfide bridge links cysteine 221 with cysteine 238. Residue histidine 242 is part of the active site. Asparagine 260 carries an N-linked (GlcNAc...) asparagine glycan. Disulfide bonds link cysteine 349–cysteine 355 and cysteine 376–cysteine 392.

This sequence belongs to the glycosyl hydrolase 28 family.

The protein resides in the secreted. It is found in the cell wall. The enzyme catalyses (1,4-alpha-D-galacturonosyl)n+m + H2O = (1,4-alpha-D-galacturonosyl)n + (1,4-alpha-D-galacturonosyl)m.. In terms of biological role, acts in concert with the pectinesterase, in the ripening process. Is involved in cell wall metabolism, specifically in polyuronide degradation. The protein is Polygalacturonase of Prunus persica (Peach).